Here is a 294-residue protein sequence, read N- to C-terminus: MTSRLRIAVQSKGRLAEGGMDLLKRCGLRFAYGRDKLHQRAENMPVDLMLVRDDDIPNFVGSGACDYGIVGENVLAEEQAAGGRARELEVALRLGFAGCTLKLAAPDDGSIRTVADLEGKAVATSYPALTAQYIADRGVKAEIVEMRGSVEVAPRLRIADAICDLVSSGATLQANGLKAFETVLRSEAVLIRRKSGRADDTDAIANILMRRSEGVIASSQTKYIMLNAPTDRLGAIRALLPGADAPTIAKVAGREDVVAVHAVCRERVFWETLEALEKEGARAILVLPIEKMLA.

Belongs to the ATP phosphoribosyltransferase family. Long subfamily. Mg(2+) serves as cofactor.

It localises to the cytoplasm. The catalysed reaction is 1-(5-phospho-beta-D-ribosyl)-ATP + diphosphate = 5-phospho-alpha-D-ribose 1-diphosphate + ATP. Its pathway is amino-acid biosynthesis; L-histidine biosynthesis; L-histidine from 5-phospho-alpha-D-ribose 1-diphosphate: step 1/9. Feedback inhibited by histidine. In terms of biological role, catalyzes the condensation of ATP and 5-phosphoribose 1-diphosphate to form N'-(5'-phosphoribosyl)-ATP (PR-ATP). Has a crucial role in the pathway because the rate of histidine biosynthesis seems to be controlled primarily by regulation of HisG enzymatic activity. This chain is ATP phosphoribosyltransferase, found in Maricaulis maris (strain MCS10) (Caulobacter maris).